A 262-amino-acid chain; its full sequence is Phosphatidylglycerol--prolipoprotein diacylglyceryl transferase (262 aa).

Helical transmembrane passes span 17–37, 59–79, 94–114, and 121–141; these read FAIHWYGLMYLMAFVQFLLLG, LLFAGVLGVVLGGRLGYTLFY, IWEGGMSFHGGLLGVLAALYW, and TTFFVVSDLVAPLVPFGLAFG. Arg-142 lines the a 1,2-diacyl-sn-glycero-3-phospho-(1'-sn-glycerol) pocket. A run of 3 helical transmembrane segments spans residues 176 to 196, 201 to 221, and 231 to 251; these read QIYQLLGEGVLLGIALWFYAG, VGQVSGFFLLGYGICRFLAEY, and LLGLGLSMGQWLCVPMIFFGI.

The protein belongs to the Lgt family.

Its subcellular location is the cell inner membrane. The catalysed reaction is L-cysteinyl-[prolipoprotein] + a 1,2-diacyl-sn-glycero-3-phospho-(1'-sn-glycerol) = an S-1,2-diacyl-sn-glyceryl-L-cysteinyl-[prolipoprotein] + sn-glycerol 1-phosphate + H(+). It participates in protein modification; lipoprotein biosynthesis (diacylglyceryl transfer). Functionally, catalyzes the transfer of the diacylglyceryl group from phosphatidylglycerol to the sulfhydryl group of the N-terminal cysteine of a prolipoprotein, the first step in the formation of mature lipoproteins. In Polynucleobacter necessarius subsp. necessarius (strain STIR1), this protein is Phosphatidylglycerol--prolipoprotein diacylglyceryl transferase.